A 472-amino-acid chain; its full sequence is F420-non-reducing hydrogenase subunit A (472 aa).

Positions 61, 64, 442, and 445 each coordinate Ni(2+).

This sequence belongs to the [NiFe]/[NiFeSe] hydrogenase large subunit family. The F420-non-reducing hydrogenase is composed of three subunits; MvhA, MvhD and MvhG. It forms a complex with the heterodisulfide reductase (hdr). Requires Ni(2+) as cofactor.

Its function is as follows. Part of a complex that provides reducing equivalents for heterodisulfide reductase. This Methanothermobacter marburgensis (strain ATCC BAA-927 / DSM 2133 / JCM 14651 / NBRC 100331 / OCM 82 / Marburg) (Methanobacterium thermoautotrophicum) protein is F420-non-reducing hydrogenase subunit A (mvhA).